We begin with the raw amino-acid sequence, 286 residues long: MEGKEEDVRVGANKFPERQPIGTSAQSDKDYKEPPPAPFFEPGELSSWSFWRAGIAEFIATFLFLYITVLTVMGVKRSPNMCASVGIQGIAWAFGGMIFALVYCTAGISGGHINPAVTFGLFLARKLSLTRALYYIVMQCLGAICGAGVVKGFQPKQYQALGGGANTVAHGYTKGSGLGAEIIGTFVLVYTVFSATDAKRNARDSHVPILAPLPIGFAVFLVHLATIPITGTGINPARSLGAAIIYNKDHSWDDHWVFWVGPFIGAALAALYHVVVIRAIPFKSRS.

M1 bears the N-acetylmethionine mark. The tract at residues 1 to 34 is disordered; it reads MEGKEEDVRVGANKFPERQPIGTSAQSDKDYKEP. Residues 1–54 lie on the Cytoplasmic side of the membrane; sequence MEGKEEDVRVGANKFPERQPIGTSAQSDKDYKEPPPAPFFEPGELSSWSFWRAG. Residues 55 to 75 traverse the membrane as a helical segment; sequence IAEFIATFLFLYITVLTVMGV. At 76–91 the chain is on the extracellular side; that stretch reads KRSPNMCASVGIQGIA. A helical membrane pass occupies residues 92–112; it reads WAFGGMIFALVYCTAGISGGH. Topologically, residues 113-132 are cytoplasmic; it reads INPAVTFGLFLARKLSLTRA. The short motif at 114–116 is the NPA 1 element; the sequence is NPA. The chain crosses the membrane as a helical span at residues 133–153; sequence LYYIVMQCLGAICGAGVVKGF. Residues 154–174 lie on the Extracellular side of the membrane; sequence QPKQYQALGGGANTVAHGYTK. A helical membrane pass occupies residues 175-195; sequence GSGLGAEIIGTFVLVYTVFSA. Over 196 to 208 the chain is Cytoplasmic; it reads TDAKRNARDSHVP. The helical transmembrane segment at 209 to 229 threads the bilayer; that stretch reads ILAPLPIGFAVFLVHLATIPI. Residues 230–256 are Extracellular-facing; it reads TGTGINPARSLGAAIIYNKDHSWDDHW. Residues 235-237 carry the NPA 2 motif; that stretch reads NPA. A helical membrane pass occupies residues 257–277; sequence VFWVGPFIGAALAALYHVVVI. Topologically, residues 278–286 are cytoplasmic; it reads RAIPFKSRS. S284 is subject to Phosphoserine.

The protein belongs to the MIP/aquaporin (TC 1.A.8) family. PIP (TC 1.A.8.11) subfamily. Widely expressed. Expressed in roots, above ground and in flower buds.

The protein resides in the cell membrane. In terms of biological role, water channel required to facilitate the transport of water across cell membrane. Its function is impaired by Hg(2+). The chain is Aquaporin PIP1-1 (PIP1-1) from Arabidopsis thaliana (Mouse-ear cress).